The sequence spans 104 residues: Thiosulfate sulfurtransferase PspE (104 aa).

Positions 1 to 19 (MFKKGLLALALVFSLPVFA) are cleaved as a signal peptide. Residues 20–104 (AEHWIDVRVP…KDIAMPKVKG (85 aa)) enclose the Rhodanese domain. Cysteine 67 serves as the catalytic Cysteine persulfide intermediate.

In terms of assembly, monomer.

It is found in the periplasm. The enzyme catalyses thiosulfate + hydrogen cyanide = thiocyanate + sulfite + 2 H(+). Its activity is regulated as follows. Inhibited by thiosulfate above 100 mM, particularly at low cyanide concentrations (&lt;5 mM). Inhibited by sodium sulfate or sodium chloride at 0.25 M which gives around 50% inhibition of rhodanese activity. Addition of sodium phosphate at the same concentration results in about 65% inhibition. Sulfite strongly inhibits PspE activity (1 mM sodium sulfite resulted in more than 50% inhibition of rhodanese activity). Functionally, the phage shock protein (psp) operon (pspABCDE) may play a significant role in the competition for survival under nutrient- or energy-limited conditions. PspE catalyzes the sulfur-transfer reaction from thiosulfate to cyanide, to form sulfite and thiocyanate. Also able to use dithiol (dithiothreitol) as an alternate sulfur acceptor. Also possesses a very low mercaptopyruvate sulfurtransferase activity. This Escherichia coli (strain K12) protein is Thiosulfate sulfurtransferase PspE (pspE).